Consider the following 46-residue polypeptide: DKGFGFITPADGSKDVFVHFSAIQSNDFKTLDEGQKVEFSIENGAK.

One can recognise a CSD domain in the interval 1-46; the sequence is DKGFGFITPADGSKDVFVHFSAIQSNDFKTLDEGQKVEFSIENGAK.

In terms of assembly, homodimer.

It localises to the cytoplasm. The polypeptide is Major cold shock protein (cspA) (Yersinia enterocolitica).